The chain runs to 176 residues: MARRLPKPTLQGRLEADFPDSPLLPKFQELNQNNLPNDVFREAQRSYLVFLTSQFCYEEYVQRTFGVPRRQRAIDKRQRASVAGAGAHAHLGGSSATPVQQAQAAASAGTGALASSAPSTAVAQSATPSVSSSISSLRAATSGATAAASAAAAVDTGSGGGGQPHDTAPRGARKKQ.

2 disordered regions span residues 75 to 109 (DKRQ…ASAG) and 148 to 176 (ASAA…RKKQ). Residues 80–109 (ASVAGAGAHAHLGGSSATPVQQAQAAASAG) show a composition bias toward low complexity.

The protein belongs to the herpesviridae small capsomere-interacting protein family. Interacts with the major capsid protein/MCP.

It localises to the virion. The protein localises to the host nucleus. Participates in the assembly of the infectious particles by decorating the outer surface of the capsid shell and thus forming a layer between the capsid and the tegument. Complexes composed of the major capsid protein and small capsomere-interacting protein/SCP assemble together in the host cytoplasm and are translocated to the nucleus, where they accumulate and participate in capsid assembly. The sequence is that of Small capsomere-interacting protein from Epstein-Barr virus (strain B95-8) (HHV-4).